The primary structure comprises 341 residues: tRNA N6-adenosine threonylcarbamoyltransferase (341 aa).

2 residues coordinate Fe cation: H117 and H121. Residues 139 to 143 (VVSGG), D172, G185, D189, and N278 contribute to the substrate site. D307 is a binding site for Fe cation.

The protein belongs to the KAE1 / TsaD family. Fe(2+) is required as a cofactor.

It localises to the cytoplasm. The enzyme catalyses L-threonylcarbamoyladenylate + adenosine(37) in tRNA = N(6)-L-threonylcarbamoyladenosine(37) in tRNA + AMP + H(+). Functionally, required for the formation of a threonylcarbamoyl group on adenosine at position 37 (t(6)A37) in tRNAs that read codons beginning with adenine. Is involved in the transfer of the threonylcarbamoyl moiety of threonylcarbamoyl-AMP (TC-AMP) to the N6 group of A37, together with TsaE and TsaB. TsaD likely plays a direct catalytic role in this reaction. In Bacillus licheniformis (strain ATCC 14580 / DSM 13 / JCM 2505 / CCUG 7422 / NBRC 12200 / NCIMB 9375 / NCTC 10341 / NRRL NRS-1264 / Gibson 46), this protein is tRNA N6-adenosine threonylcarbamoyltransferase.